The primary structure comprises 159 residues: SsrA-binding protein (159 aa).

The segment at 134–159 (KLHDKRETSKERDWNRQKNRLLKERG) is disordered. Basic and acidic residues predominate over residues 137-159 (DKRETSKERDWNRQKNRLLKERG).

It belongs to the SmpB family.

The protein localises to the cytoplasm. Required for rescue of stalled ribosomes mediated by trans-translation. Binds to transfer-messenger RNA (tmRNA), required for stable association of tmRNA with ribosomes. tmRNA and SmpB together mimic tRNA shape, replacing the anticodon stem-loop with SmpB. tmRNA is encoded by the ssrA gene; the 2 termini fold to resemble tRNA(Ala) and it encodes a 'tag peptide', a short internal open reading frame. During trans-translation Ala-aminoacylated tmRNA acts like a tRNA, entering the A-site of stalled ribosomes, displacing the stalled mRNA. The ribosome then switches to translate the ORF on the tmRNA; the nascent peptide is terminated with the 'tag peptide' encoded by the tmRNA and targeted for degradation. The ribosome is freed to recommence translation, which seems to be the essential function of trans-translation. The protein is SsrA-binding protein of Sinorhizobium fredii (strain NBRC 101917 / NGR234).